Consider the following 215-residue polypeptide: MAPLLGDNFPEIEVVTTHGRMKLPEAFKGKWFVLFSHPADFTPVCTTEFVAFQNRYDEFRKLNCELIGLSIDQVFSHIKWIEWIKEKLDIEIEFPVIADDTGRVAEMLGLIHPAKGTNTVRAVFIVDPEAVIRAVIYYPQELGRNMDEILRAVKALQVSDQNGVAMPANWPNNELVGDAVIIPPPISEAEAKERLEKAKAGDISCYDWWFCYKKI.

A Thioredoxin domain is found at 3 to 158; sequence PLLGDNFPEI…ILRAVKALQV (156 aa). The Cysteine sulfenic acid (-SOH) intermediate role is filled by C45. Substrate is bound at residue R121. The cysteines at positions 205 and 211 are disulfide-linked.

Belongs to the peroxiredoxin family. Prx6 subfamily. In terms of assembly, homodecamer. Pentamer of dimers that assemble into a ring structure.

The protein localises to the cytoplasm. It carries out the reaction a hydroperoxide + [thioredoxin]-dithiol = an alcohol + [thioredoxin]-disulfide + H2O. Its function is as follows. Thiol-specific peroxidase that catalyzes the reduction of hydrogen peroxide and organic hydroperoxides to water and alcohols, respectively. Plays a role in cell protection against oxidative stress by detoxifying peroxides. The polypeptide is Peroxiredoxin (Archaeoglobus fulgidus (strain ATCC 49558 / DSM 4304 / JCM 9628 / NBRC 100126 / VC-16)).